A 187-amino-acid polypeptide reads, in one-letter code: Transmembrane protein 11-B, mitochondrial (187 aa).

2 consecutive transmembrane segments (helical) span residues threonine 79–proline 95 and valine 102–isoleucine 119.

Belongs to the TMEM11 family.

The protein localises to the mitochondrion inner membrane. Plays a role in mitochondrial morphogenesis. This is Transmembrane protein 11-B, mitochondrial (tmem11-b) from Xenopus laevis (African clawed frog).